Consider the following 208-residue polypeptide: Large ribosomal subunit protein uL4 (208 aa).

Residues 45-77 (RQGTHKAKERAEIKGSTRKIKKQKGTGTARAGS) form a disordered region.

It belongs to the universal ribosomal protein uL4 family. In terms of assembly, part of the 50S ribosomal subunit.

Its function is as follows. One of the primary rRNA binding proteins, this protein initially binds near the 5'-end of the 23S rRNA. It is important during the early stages of 50S assembly. It makes multiple contacts with different domains of the 23S rRNA in the assembled 50S subunit and ribosome. In terms of biological role, forms part of the polypeptide exit tunnel. In Christiangramia forsetii (strain DSM 17595 / CGMCC 1.15422 / KT0803) (Gramella forsetii), this protein is Large ribosomal subunit protein uL4.